A 140-amino-acid chain; its full sequence is Nucleoside diphosphate kinase (140 aa).

Lysine 11, phenylalanine 59, arginine 87, threonine 93, arginine 104, and asparagine 114 together coordinate ATP. Histidine 117 serves as the catalytic Pros-phosphohistidine intermediate.

This sequence belongs to the NDK family. As to quaternary structure, homotetramer. Requires Mg(2+) as cofactor.

Its subcellular location is the cytoplasm. It carries out the reaction a 2'-deoxyribonucleoside 5'-diphosphate + ATP = a 2'-deoxyribonucleoside 5'-triphosphate + ADP. The catalysed reaction is a ribonucleoside 5'-diphosphate + ATP = a ribonucleoside 5'-triphosphate + ADP. Major role in the synthesis of nucleoside triphosphates other than ATP. The ATP gamma phosphate is transferred to the NDP beta phosphate via a ping-pong mechanism, using a phosphorylated active-site intermediate. The sequence is that of Nucleoside diphosphate kinase from Francisella tularensis subsp. holarctica (strain LVS).